The following is a 530-amino-acid chain: Bifunctional purine biosynthesis protein PurH (530 aa).

The MGS-like domain occupies 2-150; sequence TDHPRRVTRA…KNHDDVAVVV (149 aa).

It belongs to the PurH family.

It catalyses the reaction (6R)-10-formyltetrahydrofolate + 5-amino-1-(5-phospho-beta-D-ribosyl)imidazole-4-carboxamide = 5-formamido-1-(5-phospho-D-ribosyl)imidazole-4-carboxamide + (6S)-5,6,7,8-tetrahydrofolate. The enzyme catalyses IMP + H2O = 5-formamido-1-(5-phospho-D-ribosyl)imidazole-4-carboxamide. Its pathway is purine metabolism; IMP biosynthesis via de novo pathway; 5-formamido-1-(5-phospho-D-ribosyl)imidazole-4-carboxamide from 5-amino-1-(5-phospho-D-ribosyl)imidazole-4-carboxamide (10-formyl THF route): step 1/1. It participates in purine metabolism; IMP biosynthesis via de novo pathway; IMP from 5-formamido-1-(5-phospho-D-ribosyl)imidazole-4-carboxamide: step 1/1. This chain is Bifunctional purine biosynthesis protein PurH, found in Bradyrhizobium diazoefficiens (strain JCM 10833 / BCRC 13528 / IAM 13628 / NBRC 14792 / USDA 110).